Consider the following 86-residue polypeptide: Acyl carrier protein (86 aa).

Residues 2–82 form the Carrier domain; it reads ATVFERVKKV…AVVDYLKSKG (81 aa). Residue serine 37 is modified to O-(pantetheine 4'-phosphoryl)serine.

The protein belongs to the acyl carrier protein (ACP) family. In terms of processing, 4'-phosphopantetheine is transferred from CoA to a specific serine of apo-ACP by AcpS. This modification is essential for activity because fatty acids are bound in thioester linkage to the sulfhydryl of the prosthetic group.

It localises to the cytoplasm. It functions in the pathway lipid metabolism; fatty acid biosynthesis. Functionally, carrier of the growing fatty acid chain in fatty acid biosynthesis. This is Acyl carrier protein from Dehalococcoides mccartyi (strain ATCC BAA-2266 / KCTC 15142 / 195) (Dehalococcoides ethenogenes (strain 195)).